Here is a 352-residue protein sequence, read N- to C-terminus: tRNA(Ile)-lysidine synthase (352 aa).

58–63 (SGGADS) serves as a coordination point for ATP.

This sequence belongs to the tRNA(Ile)-lysidine synthase family.

It localises to the cytoplasm. It carries out the reaction cytidine(34) in tRNA(Ile2) + L-lysine + ATP = lysidine(34) in tRNA(Ile2) + AMP + diphosphate + H(+). In terms of biological role, ligates lysine onto the cytidine present at position 34 of the AUA codon-specific tRNA(Ile) that contains the anticodon CAU, in an ATP-dependent manner. Cytidine is converted to lysidine, thus changing the amino acid specificity of the tRNA from methionine to isoleucine. The polypeptide is tRNA(Ile)-lysidine synthase (Streptomyces coelicolor (strain ATCC BAA-471 / A3(2) / M145)).